We begin with the raw amino-acid sequence, 162 residues long: MESWVFERGSLTRRLKAACGADFNVRVIRQGFAHPFPDEALLLKLRSGRRALVREVELRSRERRLVLARSVLPAQTLKGAGRRLAHLGNRPLGEILFASRRPRRHGFEAALAEDRHWRPAVRAGSGSAGPVWGRRSLYSIAGRPLLVAEFFLPAVLSVPESA.

Arginine 54, leucine 92, and glutamate 149 together coordinate substrate.

The protein belongs to the UbiC family.

The protein resides in the cytoplasm. The enzyme catalyses chorismate = 4-hydroxybenzoate + pyruvate. The protein operates within cofactor biosynthesis; ubiquinone biosynthesis. Removes the pyruvyl group from chorismate, with concomitant aromatization of the ring, to provide 4-hydroxybenzoate (4HB) for the ubiquinone pathway. The chain is Probable chorismate pyruvate-lyase from Methylococcus capsulatus (strain ATCC 33009 / NCIMB 11132 / Bath).